A 416-amino-acid chain; its full sequence is Gamma-glutamyl phosphate reductase (416 aa).

This sequence belongs to the gamma-glutamyl phosphate reductase family.

It is found in the cytoplasm. The enzyme catalyses L-glutamate 5-semialdehyde + phosphate + NADP(+) = L-glutamyl 5-phosphate + NADPH + H(+). It participates in amino-acid biosynthesis; L-proline biosynthesis; L-glutamate 5-semialdehyde from L-glutamate: step 2/2. Functionally, catalyzes the NADPH-dependent reduction of L-glutamate 5-phosphate into L-glutamate 5-semialdehyde and phosphate. The product spontaneously undergoes cyclization to form 1-pyrroline-5-carboxylate. The polypeptide is Gamma-glutamyl phosphate reductase (Salmonella agona (strain SL483)).